Reading from the N-terminus, the 616-residue chain is Electron transfer flavoprotein-ubiquinone oxidoreductase, mitochondrial (616 aa).

A mitochondrion-targeting transit peptide spans 1-32 (MLVRLTKLSCPAYHWFHALKIKKCLPLCAPRC). FAD is bound at residue 70–84 (VVIVGAGPAGLSAAI). Position 95 is an N6-acetyllysine (K95). The stretch at 108 to 129 (IGAHTLSGACLDPAAFKELFPD) is an intramembrane region. 2 positions are modified to N6-acetyllysine: K131 and K222. Residues G304 and G305 each contribute to the a ubiquinone site. An N6-acetyllysine mark is found at K356 and K415. The stretch at 427–446 (TGLHVTEYEDNLKQSWVWKE) is an intramembrane region. The residue at position 550 (S550) is a Phosphoserine. [4Fe-4S] cluster contacts are provided by C560, C585, C588, and C591. Positions 576–605 (FRLQINAQNCVHCKTCDIKDPSQNINWVVP) constitute a 4Fe-4S ferredoxin-type domain.

Belongs to the ETF-QO/FixC family. Monomer. [4Fe-4S] cluster is required as a cofactor. The cofactor is FAD. Post-translationally, acetylation of Lys-95 and Lys-222 is observed in liver mitochondria from fasted mice but not from fed mice.

It is found in the mitochondrion inner membrane. It carries out the reaction a ubiquinone + reduced [electron-transfer flavoprotein] = a ubiquinol + oxidized [electron-transfer flavoprotein] + H(+). Its function is as follows. Accepts electrons from ETF and reduces ubiquinone. In Mus musculus (Mouse), this protein is Electron transfer flavoprotein-ubiquinone oxidoreductase, mitochondrial (Etfdh).